Consider the following 204-residue polypeptide: Shikimate kinase (204 aa).

A35–T40 lines the ATP pocket. S39 lines the Mg(2+) pocket. Residues D57, R81, and G103 each coordinate substrate. Position 142 (R142) interacts with ATP. R169 is a binding site for substrate.

It belongs to the shikimate kinase family. Monomer. The cofactor is Mg(2+).

It is found in the cytoplasm. It carries out the reaction shikimate + ATP = 3-phosphoshikimate + ADP + H(+). It functions in the pathway metabolic intermediate biosynthesis; chorismate biosynthesis; chorismate from D-erythrose 4-phosphate and phosphoenolpyruvate: step 5/7. In terms of biological role, catalyzes the specific phosphorylation of the 3-hydroxyl group of shikimic acid using ATP as a cosubstrate. This chain is Shikimate kinase, found in Salinibacter ruber (strain DSM 13855 / M31).